The sequence spans 366 residues: G-protein coupled receptor 183 (366 aa).

At 1–37 (MQVMRTFNQPPTSSHPTPTLNDSDTCITLYNHRGYAR) the chain is on the extracellular side. An N-linked (GlcNAc...) asparagine glycan is attached at asparagine 21. The helical transmembrane segment at 38 to 63 (VLMPLFYCIVFFVGLLGNALAFHIIR) threads the bilayer. Residues 64 to 83 (PNVKKINSTTLYSANLVISD) are Cytoplasmic-facing. A helical transmembrane segment spans residues 84-101 (ILFTLSLPLRIIYYALGF). Over 102 to 111 (HWPLGETLCK) the chain is Extracellular. Cysteines 110 and 188 form a disulfide. A helical transmembrane segment spans residues 112–133 (IVGLIFYINTYAGVNFMTCLSV). Topologically, residues 134 to 155 (DRFIAVVLPLRFARFRKVSNVR) are cytoplasmic. The helical transmembrane segment at 156 to 174 (YICVGVWLLVLMQTLPLLS) threads the bilayer. Residues 175-199 (MPMTNEEPDGFITCMEYPNFEPVPN) are Extracellular-facing. Residues 200–222 (ISYILIGAVFLGYGVPVVTILVC) traverse the membrane as a helical segment. At 223-248 (YSILCCKLRLAAKANQLTDKSGRSQK) the chain is on the cytoplasmic side. A helical transmembrane segment spans residues 249–272 (AIGVICCVSLVFVVCFSPYHIDLL). Residues 273 to 292 (QYMIRKLIYTPDCAELTAFQ) are Extracellular-facing. The chain crosses the membrane as a helical span at residues 293 to 317 (ISLHFTVCLMNLNSCLDPFIYFFAC). Over 318 to 366 (KGYKTKVLKILKRQVSVSFSSAARTLPEGLSRDISDGNKIHLNSTRHKE) the chain is Cytoplasmic.

Belongs to the G-protein coupled receptor 1 family.

It is found in the cell membrane. In terms of biological role, G-protein coupled receptor expressed in lymphocytes that acts as a chemotactic receptor for B-cells, T-cells, splenic dendritic cells, monocytes/macrophages and astrocytes. Receptor for oxysterol 7-alpha,25-dihydroxycholesterol (7-alpha,25-OHC) and other related oxysterols. Mediates cell positioning and movement of a number of cells by binding the 7-alpha,25-OHC ligand that forms a chemotactic gradient. Binding of 7-alpha,25-OHC mediates the correct localization of B-cells during humoral immune responses. The chain is G-protein coupled receptor 183 (gpr183) from Salmo salar (Atlantic salmon).